The chain runs to 324 residues: Membrane protein UL8 (324 aa).

The interval 36-138 is immunoglobulin V-like domain; it reads ILESIIYVSG…LWYNLTVKPK (103 aa). Residues 278–298 traverse the membrane as a helical segment; sequence THYSWMLIIAIILIIFIIICL.

It belongs to the RL11 family. Post-translationally, highly glycosylated.

The protein resides in the host cell membrane. In terms of biological role, plays a role in the inhibition of pro-inflammatory cytokine production. This effect is mediated by the conserved Ig-like domain. This is Membrane protein UL8 (UL8) from Homo sapiens (Human).